Consider the following 179-residue polypeptide: Peptidyl-tRNA hydrolase 2, mitochondrial (179 aa).

The chain crosses the membrane as a helical span at residues 15–37 (STLGLAVGVACGMCLGWSLRVCF). Glycyl lysine isopeptide (Lys-Gly) (interchain with G-Cter in ubiquitin) cross-links involve residues lysine 47, lysine 76, lysine 81, lysine 95, lysine 106, lysine 115, lysine 171, and lysine 177.

It belongs to the PTH2 family. In terms of assembly, monomer. Ubiquitinated by PRKN during mitophagy, leading to its degradation and enhancement of mitophagy. Deubiquitinated by USP30.

It is found in the mitochondrion outer membrane. It carries out the reaction an N-acyl-L-alpha-aminoacyl-tRNA + H2O = an N-acyl-L-amino acid + a tRNA + H(+). Its function is as follows. Peptidyl-tRNA hydrolase which releases tRNAs from the ribosome during protein synthesis. Promotes caspase-independent apoptosis by regulating the function of two transcriptional regulators, AES and TLE1. The protein is Peptidyl-tRNA hydrolase 2, mitochondrial (PTRH2) of Homo sapiens (Human).